The chain runs to 206 residues: GDT1-like protein sll0615 (206 aa).

5 helical membrane-spanning segments follow: residues 36–56 (WVLV…VLMG), 58–78 (IFTF…FLIF), 114–134 (IVPR…VAEW), 151–171 (AWGV…IAVM), and 185–205 (VTLI…WTKI).

This sequence belongs to the GDT1 family.

It localises to the cell membrane. The polypeptide is GDT1-like protein sll0615 (Synechocystis sp. (strain ATCC 27184 / PCC 6803 / Kazusa)).